The following is a 314-amino-acid chain: Ribosomal RNA small subunit methyltransferase H (314 aa).

Residues 36 to 38 (GGH), aspartate 56, phenylalanine 80, aspartate 102, and glutamine 109 each bind S-adenosyl-L-methionine. The tract at residues 278 to 300 (GGRSLKSIGKMKPSEEEVADNPR) is disordered. Positions 289 to 300 (KPSEEEVADNPR) are enriched in basic and acidic residues.

This sequence belongs to the methyltransferase superfamily. RsmH family.

The protein localises to the cytoplasm. The enzyme catalyses cytidine(1402) in 16S rRNA + S-adenosyl-L-methionine = N(4)-methylcytidine(1402) in 16S rRNA + S-adenosyl-L-homocysteine + H(+). In terms of biological role, specifically methylates the N4 position of cytidine in position 1402 (C1402) of 16S rRNA. This Photorhabdus laumondii subsp. laumondii (strain DSM 15139 / CIP 105565 / TT01) (Photorhabdus luminescens subsp. laumondii) protein is Ribosomal RNA small subunit methyltransferase H.